The following is a 415-amino-acid chain: Transposase for insertion sequence element IS1081 (415 aa).

This sequence belongs to the transposase mutator family.

Functionally, required for the transposition of the insertion element. This chain is Transposase for insertion sequence element IS1081, found in Mycobacterium bovis (strain ATCC BAA-935 / AF2122/97).